A 424-amino-acid chain; its full sequence is Glutamyl-tRNA reductase (424 aa).

Residues 49-52 (TCNR), S107, 112-114 (EPQ), and Q118 contribute to the substrate site. The active-site Nucleophile is the C50. NADP(+) is bound at residue 187–192 (GAGETI).

It belongs to the glutamyl-tRNA reductase family. As to quaternary structure, homodimer.

It carries out the reaction (S)-4-amino-5-oxopentanoate + tRNA(Glu) + NADP(+) = L-glutamyl-tRNA(Glu) + NADPH + H(+). Its pathway is porphyrin-containing compound metabolism; protoporphyrin-IX biosynthesis; 5-aminolevulinate from L-glutamyl-tRNA(Glu): step 1/2. In terms of biological role, catalyzes the NADPH-dependent reduction of glutamyl-tRNA(Glu) to glutamate 1-semialdehyde (GSA). The chain is Glutamyl-tRNA reductase from Chromohalobacter salexigens (strain ATCC BAA-138 / DSM 3043 / CIP 106854 / NCIMB 13768 / 1H11).